A 131-amino-acid chain; its full sequence is Translation initiation factor 5A (131 aa).

A Hypusine modification is found at Lys-37.

Belongs to the eIF-5A family.

The protein localises to the cytoplasm. Functionally, functions by promoting the formation of the first peptide bond. The chain is Translation initiation factor 5A (eIF5A) from Methanococcus vannielii (strain ATCC 35089 / DSM 1224 / JCM 13029 / OCM 148 / SB).